The following is a 567-amino-acid chain: 2-succinyl-5-enolpyruvyl-6-hydroxy-3-cyclohexene-1-carboxylate synthase (567 aa).

This sequence belongs to the TPP enzyme family. MenD subfamily. Homodimer. Mg(2+) is required as a cofactor. Requires Mn(2+) as cofactor. It depends on thiamine diphosphate as a cofactor.

The enzyme catalyses isochorismate + 2-oxoglutarate + H(+) = 5-enolpyruvoyl-6-hydroxy-2-succinyl-cyclohex-3-ene-1-carboxylate + CO2. The protein operates within quinol/quinone metabolism; 1,4-dihydroxy-2-naphthoate biosynthesis; 1,4-dihydroxy-2-naphthoate from chorismate: step 2/7. It functions in the pathway quinol/quinone metabolism; menaquinone biosynthesis. Its function is as follows. Catalyzes the thiamine diphosphate-dependent decarboxylation of 2-oxoglutarate and the subsequent addition of the resulting succinic semialdehyde-thiamine pyrophosphate anion to isochorismate to yield 2-succinyl-5-enolpyruvyl-6-hydroxy-3-cyclohexene-1-carboxylate (SEPHCHC). The chain is 2-succinyl-5-enolpyruvyl-6-hydroxy-3-cyclohexene-1-carboxylate synthase from Yersinia pestis bv. Antiqua (strain Angola).